The sequence spans 94 residues: Histone-like DNA-binding protein (94 aa).

Belongs to the bacterial histone-like protein family.

This chain is Histone-like DNA-binding protein, found in Rickettsia bellii (strain RML369-C).